A 77-amino-acid polypeptide reads, in one-letter code: MKADIHPAYETIEVTCSCGNKFETRSNLCKPLGTDVCNECHPFYTGKQKTLDTGGRVQRFADRFGAFGKKPAATPAE.

Positions 16, 18, 37, and 40 each coordinate Zn(2+).

The protein belongs to the bacterial ribosomal protein bL31 family. Type A subfamily. As to quaternary structure, part of the 50S ribosomal subunit. It depends on Zn(2+) as a cofactor.

Binds the 23S rRNA. This chain is Large ribosomal subunit protein bL31, found in Pseudomonas fluorescens (strain SBW25).